Reading from the N-terminus, the 395-residue chain is E3 ubiquitin-protein ligase RDUF1 (395 aa).

Disordered stretches follow at residues 1–22 (MMPN…TTTT) and 107–130 (PVIV…EGDG). Over residues 9-22 (TITPTTESTTTTTT) the composition is skewed to low complexity. Positions 121-130 (ERVENEEGDG) are enriched in basic and acidic residues. Residues 215 to 256 (CAVCTEVFEAGIEGREMPCKHIFHGDCIVPWLSIRNSCPVCR) form an RING-type; atypical zinc finger.

As to expression, expressed in root tips, leaf tips, junction of carpels and pedicels, stigma, anthers, pollen, vasculature of sepals and petals, immature seeds and embryos.

Its subcellular location is the cytoplasm. The protein localises to the cytosol. It localises to the nucleus. It carries out the reaction S-ubiquitinyl-[E2 ubiquitin-conjugating enzyme]-L-cysteine + [acceptor protein]-L-lysine = [E2 ubiquitin-conjugating enzyme]-L-cysteine + N(6)-ubiquitinyl-[acceptor protein]-L-lysine.. Its pathway is protein modification; protein ubiquitination. In terms of biological role, E3 ubiquitin-protein ligase involved in the positive regulation of abscisic acid-dependent drought stress responses. Involved in the positive regulation of responses to salt and osmotic stresses during seed germination and early seedling development. Possesses E3 ubiquitin ligase activity in vitro. This Arabidopsis thaliana (Mouse-ear cress) protein is E3 ubiquitin-protein ligase RDUF1.